A 155-amino-acid chain; its full sequence is Probable jacalin-related lectin 26 (155 aa).

2 helical membrane passes run 26-48 (AYLY…IAMI) and 127-149 (VSFV…VLFL). Residues 47-155 (MIRAGSVGKK…VLFLMKFKRS (109 aa)) form the Jacalin-type lectin domain.

The protein belongs to the jacalin lectin family.

Its subcellular location is the membrane. The chain is Probable jacalin-related lectin 26 (JAL26) from Arabidopsis thaliana (Mouse-ear cress).